The sequence spans 295 residues: Glycine N-methyltransferase (295 aa).

Positions 4 and 6 each coordinate (6S)-5-methyl-5,6,7,8-tetrahydrofolate. Phosphoserine is present on Ser-10. The S-adenosyl-L-methionine site is built by Tyr-22, Trp-31, Tyr-34, and Arg-41. Tyr-34 carries the phosphotyrosine modification. Lys-46 carries the post-translational modification N6-succinyllysine. S-adenosyl-L-methionine-binding positions include Ala-65, 86–88 (DAS), 117–118 (NW), 139–142 (LGNS), and Arg-178. N6-succinyllysine is present on residues Lys-193, Lys-198, and Lys-203. Residue His-217 participates in (6S)-5-methyl-5,6,7,8-tetrahydrofolate binding. S-adenosyl-L-methionine is bound at residue Tyr-223. Arg-242 provides a ligand contact to (6S)-5-methyl-5,6,7,8-tetrahydrofolate.

It belongs to the class I-like SAM-binding methyltransferase superfamily. Glycine N-methyltransferase family. As to quaternary structure, homotetramer. As to expression, abundant in liver.

The protein resides in the cytoplasm. The catalysed reaction is glycine + S-adenosyl-L-methionine = sarcosine + S-adenosyl-L-homocysteine + H(+). Inhibited by 5-methyltetrahydrofolate monoglutamate and by 5-methyltetrahydrofolate pentaglutamate, inhibition is much more effective by the pentaglutamate form than by the monoglutamate form. Two molecules of 5-methyltetrahydrofolate are bound per tetramer. The binding sites are localized between subunits. Inhibitor binding may preclude movements of the polypeptide chain that are necessary for enzyme activity. Catalyzes the methylation of glycine by using S-adenosylmethionine (AdoMet) to form N-methylglycine (sarcosine) with the concomitant production of S-adenosylhomocysteine (AdoHcy), a reaction regulated by the binding of 5-methyltetrahydrofolate. Plays an important role in the regulation of methyl group metabolism by regulating the ratio between S-adenosyl-L-methionine and S-adenosyl-L-homocysteine. The sequence is that of Glycine N-methyltransferase (GNMT) from Oryctolagus cuniculus (Rabbit).